The chain runs to 640 residues: Threonine--tRNA ligase (640 aa).

One can recognise a TGS domain in the interval 1 to 61 (MPVITLPDGS…SNDATLQIIT (61 aa)). The segment at 242–533 (DHRKIGKQLD…LIEHYAGVFP (292 aa)) is catalytic. 3 residues coordinate Zn(2+): cysteine 333, histidine 384, and histidine 510.

This sequence belongs to the class-II aminoacyl-tRNA synthetase family. As to quaternary structure, homodimer. It depends on Zn(2+) as a cofactor.

It localises to the cytoplasm. The catalysed reaction is tRNA(Thr) + L-threonine + ATP = L-threonyl-tRNA(Thr) + AMP + diphosphate + H(+). Its function is as follows. Catalyzes the attachment of threonine to tRNA(Thr) in a two-step reaction: L-threonine is first activated by ATP to form Thr-AMP and then transferred to the acceptor end of tRNA(Thr). Also edits incorrectly charged L-seryl-tRNA(Thr). This is Threonine--tRNA ligase from Pseudomonas putida (strain ATCC 47054 / DSM 6125 / CFBP 8728 / NCIMB 11950 / KT2440).